The following is a 680-amino-acid chain: DNA-directed RNA polymerase subunit beta' (680 aa).

4 residues coordinate Zn(2+): C69, C71, C87, and C90. Residues D489, D491, and D493 each contribute to the Mg(2+) site.

Belongs to the RNA polymerase beta' chain family. RpoC1 subfamily. In plastids the minimal PEP RNA polymerase catalytic core is composed of four subunits: alpha, beta, beta', and beta''. When a (nuclear-encoded) sigma factor is associated with the core the holoenzyme is formed, which can initiate transcription. Mg(2+) is required as a cofactor. It depends on Zn(2+) as a cofactor.

It is found in the plastid. The protein resides in the chloroplast. The enzyme catalyses RNA(n) + a ribonucleoside 5'-triphosphate = RNA(n+1) + diphosphate. Its function is as follows. DNA-dependent RNA polymerase catalyzes the transcription of DNA into RNA using the four ribonucleoside triphosphates as substrates. The sequence is that of DNA-directed RNA polymerase subunit beta' from Manihot esculenta (Cassava).